We begin with the raw amino-acid sequence, 322 residues long: MSSEQVKDRAKAAIVGSLVADAATQPVHWVEDPNRLNEQLRNKSEPEFSSEWLNPRYRYDNGTFSIYGEQNYVLLKHLVENKGFNLKKYMDAYYRHFGPGTNYDQPQSRDRLPKQGPWRNEHITRALNKIQSGDQRSGTDVAECDSYAMITPLVAMYAGSGQLDSYVDHVVRVTLNNDRSVRTAQFFAKLLEHYILHGRDPEGFHKVLSHFPNDQYKRDWQTAYEERSMCNVDAVRKYGYGSSLPGNFQGALNCLTRNEDYVSSVRTTMRSGGCSAARSCGVGAWVAAQYGSQCIPSNWISRTLRGREVLEYASQIIRMMKR.

It belongs to the ADP-ribosylglycohydrolase family. J1 crystallin subfamily. In terms of tissue distribution, expressed in the rhopalia. Present in both the large and small eyes.

The sequence is that of Crystallin J1B from Tripedalia cystophora (Jellyfish).